Reading from the N-terminus, the 413-residue chain is Argininosuccinate synthase (413 aa).

8–16 (AYSGGLDTS) contributes to the ATP binding site. Residue Tyr87 coordinates L-citrulline. Gly117 provides a ligand contact to ATP. Thr119, Asn123, and Asp124 together coordinate L-aspartate. Residue Asn123 participates in L-citrulline binding. Residues Arg127, Ser175, Glu259, and Tyr271 each contribute to the L-citrulline site.

Belongs to the argininosuccinate synthase family. Type 1 subfamily. In terms of assembly, homotetramer.

The protein resides in the cytoplasm. The catalysed reaction is L-citrulline + L-aspartate + ATP = 2-(N(omega)-L-arginino)succinate + AMP + diphosphate + H(+). The protein operates within amino-acid biosynthesis; L-arginine biosynthesis; L-arginine from L-ornithine and carbamoyl phosphate: step 2/3. In Micrococcus luteus (strain ATCC 4698 / DSM 20030 / JCM 1464 / CCM 169 / CCUG 5858 / IAM 1056 / NBRC 3333 / NCIMB 9278 / NCTC 2665 / VKM Ac-2230) (Micrococcus lysodeikticus), this protein is Argininosuccinate synthase.